The following is a 125-amino-acid chain: Large ribosomal subunit protein bL20 (125 aa).

Belongs to the bacterial ribosomal protein bL20 family.

Binds directly to 23S ribosomal RNA and is necessary for the in vitro assembly process of the 50S ribosomal subunit. It is not involved in the protein synthesizing functions of that subunit. In Zymomonas mobilis subsp. mobilis (strain ATCC 31821 / ZM4 / CP4), this protein is Large ribosomal subunit protein bL20.